We begin with the raw amino-acid sequence, 330 residues long: Aspartate--ammonia ligase (330 aa).

Belongs to the class-II aminoacyl-tRNA synthetase family. AsnA subfamily.

It is found in the cytoplasm. It catalyses the reaction L-aspartate + NH4(+) + ATP = L-asparagine + AMP + diphosphate + H(+). It participates in amino-acid biosynthesis; L-asparagine biosynthesis; L-asparagine from L-aspartate (ammonia route): step 1/1. This Escherichia coli O7:K1 (strain IAI39 / ExPEC) protein is Aspartate--ammonia ligase.